A 335-amino-acid polypeptide reads, in one-letter code: 7,8-didemethyl-8-hydroxy-5-deazariboflavin synthase (335 aa).

One can recognise a Radical SAM core domain in the interval 1-246 (MTYSKNVFIP…QVAPNLIDPK (246 aa)). Cysteine 15, cysteine 19, and cysteine 22 together coordinate [4Fe-4S] cluster.

This sequence belongs to the radical SAM superfamily. CofG family. As to quaternary structure, consists of two subunits, CofG and CofH. Requires [4Fe-4S] cluster as cofactor.

It carries out the reaction 5-amino-5-(4-hydroxybenzyl)-6-(D-ribitylimino)-5,6-dihydrouracil + S-adenosyl-L-methionine = 7,8-didemethyl-8-hydroxy-5-deazariboflavin + 5'-deoxyadenosine + L-methionine + NH4(+) + H(+). The protein operates within cofactor biosynthesis; coenzyme F0 biosynthesis. In terms of biological role, catalyzes the radical-mediated synthesis of 7,8-didemethyl-8-hydroxy-5-deazariboflavin from 5-amino-5-(4-hydroxybenzyl)-6-(D-ribitylimino)-5,6-dihydrouracil. The sequence is that of 7,8-didemethyl-8-hydroxy-5-deazariboflavin synthase from Methanosarcina mazei (strain ATCC BAA-159 / DSM 3647 / Goe1 / Go1 / JCM 11833 / OCM 88) (Methanosarcina frisia).